Here is an 843-residue protein sequence, read N- to C-terminus: Glycogen phosphorylase, brain form (843 aa).

Ala-2 bears the N-acetylalanine mark. Residue Ser-15 is modified to Phosphoserine; by PHK; in form phosphorylase A. Residues Asp-43, Tyr-197, and Arg-310 each contribute to the AMP site. A Phosphotyrosine modification is found at Tyr-197. Phosphotyrosine is present on Tyr-473. Residue Lys-569 participates in pyridoxal 5'-phosphate binding. The segment at 677 to 678 (TG) is pyridoxal 5'-phosphate. An N6-(pyridoxal phosphate)lysine modification is found at Lys-681.

The protein belongs to the glycogen phosphorylase family. Homodimer. Dimers associate into a tetramer to form the enzymatically active phosphorylase A. Pyridoxal 5'-phosphate is required as a cofactor. In terms of processing, phosphorylated. Phosphorylation of Ser-15 converts phosphorylase B (unphosphorylated) to phosphorylase A.

It carries out the reaction [(1-&gt;4)-alpha-D-glucosyl](n) + phosphate = [(1-&gt;4)-alpha-D-glucosyl](n-1) + alpha-D-glucose 1-phosphate. Activity of phosphorylase is controlled both by allosteric means (through the non-covalent binding of metabolites) and by covalent modification. Thus AMP allosterically activates, whereas ATP, ADP, and glucose-6-phosphate allosterically inhibit, phosphorylase B. Activated upon phosphorylation. In terms of biological role, glycogen phosphorylase that regulates glycogen mobilization. Phosphorylase is an important allosteric enzyme in carbohydrate metabolism. Enzymes from different sources differ in their regulatory mechanisms and in their natural substrates. However, all known phosphorylases share catalytic and structural properties. This Homo sapiens (Human) protein is Glycogen phosphorylase, brain form.